The following is a 478-amino-acid chain: 3-isopropylmalate dehydratase large subunit (478 aa).

The [4Fe-4S] cluster site is built by Cys359, Cys420, and Cys423.

The protein belongs to the aconitase/IPM isomerase family. LeuC type 1 subfamily. In terms of assembly, heterodimer of LeuC and LeuD. [4Fe-4S] cluster is required as a cofactor.

It catalyses the reaction (2R,3S)-3-isopropylmalate = (2S)-2-isopropylmalate. It participates in amino-acid biosynthesis; L-leucine biosynthesis; L-leucine from 3-methyl-2-oxobutanoate: step 2/4. Functionally, catalyzes the isomerization between 2-isopropylmalate and 3-isopropylmalate, via the formation of 2-isopropylmaleate. This is 3-isopropylmalate dehydratase large subunit from Psychrobacter sp. (strain PRwf-1).